The following is a 484-amino-acid chain: tRNA-2-methylthio-N(6)-dimethylallyladenosine synthase (484 aa).

The MTTase N-terminal domain occupies 36 to 153 (GKLYIKTHGC…LPELIRARRE (118 aa)). The [4Fe-4S] cluster site is built by Cys-45, Cys-82, Cys-116, Cys-190, Cys-194, and Cys-197. The Radical SAM core domain maps to 176–415 (RAEGPSAFVS…HISAHAASIS (240 aa)). One can recognise a TRAM domain in the interval 416 to 479 (QSMVGSVQRV…SNSLRGRIQL (64 aa)). The segment at 428-450 (EGPSRRDPNELTGKSENMRPVNF) is disordered.

Belongs to the methylthiotransferase family. MiaB subfamily. Monomer. Requires [4Fe-4S] cluster as cofactor.

It localises to the cytoplasm. It carries out the reaction N(6)-dimethylallyladenosine(37) in tRNA + (sulfur carrier)-SH + AH2 + 2 S-adenosyl-L-methionine = 2-methylsulfanyl-N(6)-dimethylallyladenosine(37) in tRNA + (sulfur carrier)-H + 5'-deoxyadenosine + L-methionine + A + S-adenosyl-L-homocysteine + 2 H(+). Catalyzes the methylthiolation of N6-(dimethylallyl)adenosine (i(6)A), leading to the formation of 2-methylthio-N6-(dimethylallyl)adenosine (ms(2)i(6)A) at position 37 in tRNAs that read codons beginning with uridine. In Xanthomonas oryzae pv. oryzae (strain PXO99A), this protein is tRNA-2-methylthio-N(6)-dimethylallyladenosine synthase.